A 153-amino-acid chain; its full sequence is Ribosomal RNA large subunit methyltransferase H (153 aa).

S-adenosyl-L-methionine contacts are provided by residues leucine 63, glycine 102, and 121 to 126; that span reads FGKITL.

The protein belongs to the RNA methyltransferase RlmH family. As to quaternary structure, homodimer.

The protein localises to the cytoplasm. The enzyme catalyses pseudouridine(1915) in 23S rRNA + S-adenosyl-L-methionine = N(3)-methylpseudouridine(1915) in 23S rRNA + S-adenosyl-L-homocysteine + H(+). In terms of biological role, specifically methylates the pseudouridine at position 1915 (m3Psi1915) in 23S rRNA. This is Ribosomal RNA large subunit methyltransferase H from Sulfurovum sp. (strain NBC37-1).